The chain runs to 273 residues: Undecaprenyl-diphosphatase (273 aa).

7 helical membrane-spanning segments follow: residues 39–59 (SGLT…VVYF), 86–106 (LPFL…LFET), 117–137 (LLIG…DLFG), 146–166 (VTVS…IPGV), 189–209 (FSFL…MLHL), 220–240 (LPLA…VAFL), and 249–269 (IAPF…VILT).

It belongs to the UppP family.

Its subcellular location is the cell inner membrane. The enzyme catalyses di-trans,octa-cis-undecaprenyl diphosphate + H2O = di-trans,octa-cis-undecaprenyl phosphate + phosphate + H(+). In terms of biological role, catalyzes the dephosphorylation of undecaprenyl diphosphate (UPP). Confers resistance to bacitracin. This is Undecaprenyl-diphosphatase from Pelobacter propionicus (strain DSM 2379 / NBRC 103807 / OttBd1).